The chain runs to 350 residues: DNA-directed RNA polymerase subunit alpha (350 aa).

The alpha N-terminal domain (alpha-NTD) stretch occupies residues 1 to 226 (MLISQRPTLS…ELFGLARELN (226 aa)). The tract at residues 241 to 350 (ADHIASFALP…NQDYAETEQL (110 aa)) is alpha C-terminal domain (alpha-CTD). The disordered stretch occupies residues 328-350 (GTWTSDAGYDLDDNQDYAETEQL). The segment covering 336 to 350 (YDLDDNQDYAETEQL) has biased composition (acidic residues).

It belongs to the RNA polymerase alpha chain family. In terms of assembly, homodimer. The RNAP catalytic core consists of 2 alpha, 1 beta, 1 beta' and 1 omega subunit. When a sigma factor is associated with the core the holoenzyme is formed, which can initiate transcription.

The enzyme catalyses RNA(n) + a ribonucleoside 5'-triphosphate = RNA(n+1) + diphosphate. Its function is as follows. DNA-dependent RNA polymerase catalyzes the transcription of DNA into RNA using the four ribonucleoside triphosphates as substrates. The protein is DNA-directed RNA polymerase subunit alpha of Mycolicibacterium smegmatis (strain ATCC 700084 / mc(2)155) (Mycobacterium smegmatis).